The sequence spans 469 residues: UDP-N-acetylmuramate--L-alanine ligase (469 aa).

113–119 (GTHGKTT) is an ATP binding site.

This sequence belongs to the MurCDEF family.

It is found in the cytoplasm. The enzyme catalyses UDP-N-acetyl-alpha-D-muramate + L-alanine + ATP = UDP-N-acetyl-alpha-D-muramoyl-L-alanine + ADP + phosphate + H(+). Its pathway is cell wall biogenesis; peptidoglycan biosynthesis. In terms of biological role, cell wall formation. The protein is UDP-N-acetylmuramate--L-alanine ligase of Neisseria gonorrhoeae (strain ATCC 700825 / FA 1090).